Reading from the N-terminus, the 251-residue chain is Probable transcriptional regulatory protein BLD_0450 (251 aa).

Belongs to the TACO1 family.

The protein localises to the cytoplasm. In Bifidobacterium longum (strain DJO10A), this protein is Probable transcriptional regulatory protein BLD_0450.